Here is a 121-residue protein sequence, read N- to C-terminus: Ribonuclease P protein component (121 aa).

Belongs to the RnpA family. Consists of a catalytic RNA component (M1 or rnpB) and a protein subunit.

The enzyme catalyses Endonucleolytic cleavage of RNA, removing 5'-extranucleotides from tRNA precursor.. Functionally, RNaseP catalyzes the removal of the 5'-leader sequence from pre-tRNA to produce the mature 5'-terminus. It can also cleave other RNA substrates such as 4.5S RNA. The protein component plays an auxiliary but essential role in vivo by binding to the 5'-leader sequence and broadening the substrate specificity of the ribozyme. This chain is Ribonuclease P protein component, found in Desulfosudis oleivorans (strain DSM 6200 / JCM 39069 / Hxd3) (Desulfococcus oleovorans).